We begin with the raw amino-acid sequence, 815 residues long: Lon protease 1 (815 aa).

In terms of domain architecture, Lon N-terminal spans 19 to 212 (MPLLPLRDIV…KLFGQIRSEI (194 aa)). 364-371 (GPPGVGKT) is a binding site for ATP. A Lon proteolytic domain is found at 601–782 (KDEIGLAVGL…DDVLRKAMVV (182 aa)). Residues Ser-688 and Lys-731 contribute to the active site. Positions 793-815 (EAGAQQAVMFEQKPPAADEIRAH) are disordered.

It belongs to the peptidase S16 family. Homohexamer. Organized in a ring with a central cavity.

It localises to the cytoplasm. The catalysed reaction is Hydrolysis of proteins in presence of ATP.. ATP-dependent serine protease that mediates the selective degradation of mutant and abnormal proteins as well as certain short-lived regulatory proteins. Required for cellular homeostasis and for survival from DNA damage and developmental changes induced by stress. Degrades polypeptides processively to yield small peptide fragments that are 5 to 10 amino acids long. Binds to DNA in a double-stranded, site-specific manner. The polypeptide is Lon protease 1 (Syntrophobacter fumaroxidans (strain DSM 10017 / MPOB)).